A 199-amino-acid polypeptide reads, in one-letter code: UPF0637 protein LACR_1918 (199 aa).

Belongs to the UPF0637 family.

This is UPF0637 protein LACR_1918 from Lactococcus lactis subsp. cremoris (strain SK11).